The primary structure comprises 691 residues: Elongation factor G (691 aa).

Residues 8–282 (NKTRNIGIMA…AVVEFLPAPV (275 aa)) enclose the tr-type G domain. Residues 17 to 24 (AHIDAGKT), 81 to 85 (DTPGH), and 135 to 138 (NKMD) each bind GTP.

Belongs to the TRAFAC class translation factor GTPase superfamily. Classic translation factor GTPase family. EF-G/EF-2 subfamily.

It is found in the cytoplasm. Catalyzes the GTP-dependent ribosomal translocation step during translation elongation. During this step, the ribosome changes from the pre-translocational (PRE) to the post-translocational (POST) state as the newly formed A-site-bound peptidyl-tRNA and P-site-bound deacylated tRNA move to the P and E sites, respectively. Catalyzes the coordinated movement of the two tRNA molecules, the mRNA and conformational changes in the ribosome. The sequence is that of Elongation factor G from Heliobacterium modesticaldum (strain ATCC 51547 / Ice1).